Here is a 292-residue protein sequence, read N- to C-terminus: Elongation factor Ts (292 aa).

Residues 79–82 form an involved in Mg(2+) ion dislocation from EF-Tu region; the sequence is TDFV.

Belongs to the EF-Ts family.

It is found in the cytoplasm. Functionally, associates with the EF-Tu.GDP complex and induces the exchange of GDP to GTP. It remains bound to the aminoacyl-tRNA.EF-Tu.GTP complex up to the GTP hydrolysis stage on the ribosome. The protein is Elongation factor Ts of Xanthomonas axonopodis pv. citri (strain 306).